Consider the following 215-residue polypeptide: S-crystallin 2 (215 aa).

Positions 2–80 (PSYTLHYFNH…YLAREFGFHG (79 aa)) constitute a GST N-terminal domain. A GST C-terminal domain is found at 82–215 (NNLDMARVDF…YLKSRSSTDF (134 aa)).

It belongs to the GST superfamily. In terms of tissue distribution, lens.

In terms of biological role, S-crystallins are structural components of squids and octopi eye lens. Contains relatively little GST activity (1/1000 of that of mammalian GST enzyme). This is S-crystallin 2 (OCTS2) from Octopus vulgaris (Common octopus).